The primary structure comprises 593 residues: UvrABC system protein C (593 aa).

Positions Asp-14–Ile-91 constitute a GIY-YIG domain. The 36-residue stretch at Asn-196–Leu-231 folds into the UVR domain.

The protein belongs to the UvrC family. In terms of assembly, interacts with UvrB in an incision complex.

The protein localises to the cytoplasm. Functionally, the UvrABC repair system catalyzes the recognition and processing of DNA lesions. UvrC both incises the 5' and 3' sides of the lesion. The N-terminal half is responsible for the 3' incision and the C-terminal half is responsible for the 5' incision. This Streptococcus agalactiae serotype Ia (strain ATCC 27591 / A909 / CDC SS700) protein is UvrABC system protein C.